Here is a 154-residue protein sequence, read N- to C-terminus: Deoxyuridine 5'-triphosphate nucleotidohydrolase (154 aa).

Residues 64–66, Asn-77, 81–83, and Lys-91 each bind substrate; these read RSG and TVD. The segment at 135–154 is disordered; sequence LADTTRGDGGHGSSGGHASL. The span at 144 to 154 shows a compositional bias: gly residues; that stretch reads GHGSSGGHASL.

This sequence belongs to the dUTPase family. In terms of assembly, homotrimer. Requires Mg(2+) as cofactor.

The enzyme catalyses dUTP + H2O = dUMP + diphosphate + H(+). It functions in the pathway pyrimidine metabolism; dUMP biosynthesis; dUMP from dCTP (dUTP route): step 2/2. Its function is as follows. This enzyme is involved in nucleotide metabolism: it produces dUMP, the immediate precursor of thymidine nucleotides and it decreases the intracellular concentration of dUTP so that uracil cannot be incorporated into DNA. The sequence is that of Deoxyuridine 5'-triphosphate nucleotidohydrolase from Mycolicibacterium vanbaalenii (strain DSM 7251 / JCM 13017 / BCRC 16820 / KCTC 9966 / NRRL B-24157 / PYR-1) (Mycobacterium vanbaalenii).